The primary structure comprises 425 residues: MTKRIINNVFAREILDSRGYPTVEVEIELCDGATGRASVPSGASTGKLEALELRDQDEKRYCGKGVLKAVKAVNGVIANAIIGMDAADQSTIDKALIELDGTRNKSKLGANATLGVSLASAKAAANSFKMPLYRYLGGEQANVMPFPLINIINGGVHADNKLDFQEFMILPIGAEAFSEAIRMSAEVFHNLRSILRKRGYSTNVGDEGGFAPNIESTEEALDLIVHAIESASYSTQNHFALGLDVASSTFYKNKIYKFANKELTSEELVEYYYNLVEKYPITSMEDAMSEDDYEGWKLLTAKLGSKVQLVGDDLFVTNCELIRKGIEEKMANAVLIKPNQIGTLTETFTAIGMTKSGGYKAVISHRSGETEDTTISHIAIASNCGQIKTGSLSRSDRLAKYNELIRIEGTLERNAKYYYGLAWTS.

A (2R)-2-phosphoglycerate-binding site is contributed by Gln165. Glu207 acts as the Proton donor in catalysis. The Mg(2+) site is built by Asp244, Glu285, and Asp312. The (2R)-2-phosphoglycerate site is built by Lys337, Arg366, Ser367, and Lys388. Catalysis depends on Lys337, which acts as the Proton acceptor.

The protein belongs to the enolase family. Requires Mg(2+) as cofactor.

The protein resides in the cytoplasm. It localises to the secreted. Its subcellular location is the cell surface. It catalyses the reaction (2R)-2-phosphoglycerate = phosphoenolpyruvate + H2O. It participates in carbohydrate degradation; glycolysis; pyruvate from D-glyceraldehyde 3-phosphate: step 4/5. In terms of biological role, catalyzes the reversible conversion of 2-phosphoglycerate (2-PG) into phosphoenolpyruvate (PEP). It is essential for the degradation of carbohydrates via glycolysis. In Wolbachia sp. subsp. Brugia malayi (strain TRS), this protein is Enolase.